A 451-amino-acid chain; its full sequence is Probable glycine dehydrogenase (decarboxylating) subunit 1 (451 aa).

The protein belongs to the GcvP family. N-terminal subunit subfamily. The glycine cleavage system is composed of four proteins: P, T, L and H. In this organism, the P 'protein' is a heterodimer of two subunits.

The catalysed reaction is N(6)-[(R)-lipoyl]-L-lysyl-[glycine-cleavage complex H protein] + glycine + H(+) = N(6)-[(R)-S(8)-aminomethyldihydrolipoyl]-L-lysyl-[glycine-cleavage complex H protein] + CO2. Functionally, the glycine cleavage system catalyzes the degradation of glycine. The P protein binds the alpha-amino group of glycine through its pyridoxal phosphate cofactor; CO(2) is released and the remaining methylamine moiety is then transferred to the lipoamide cofactor of the H protein. This Staphylococcus aureus (strain MSSA476) protein is Probable glycine dehydrogenase (decarboxylating) subunit 1.